Consider the following 307-residue polypeptide: 4-hydroxythreonine-4-phosphate dehydrogenase (307 aa).

Residues histidine 126 and threonine 127 each coordinate substrate. Histidine 156, histidine 195, and histidine 251 together coordinate a divalent metal cation. The substrate site is built by lysine 259, asparagine 268, and arginine 277.

The protein belongs to the PdxA family. In terms of assembly, homodimer. Zn(2+) is required as a cofactor. Requires Mg(2+) as cofactor. It depends on Co(2+) as a cofactor.

It localises to the cytoplasm. The enzyme catalyses 4-(phosphooxy)-L-threonine + NAD(+) = 3-amino-2-oxopropyl phosphate + CO2 + NADH. The protein operates within cofactor biosynthesis; pyridoxine 5'-phosphate biosynthesis; pyridoxine 5'-phosphate from D-erythrose 4-phosphate: step 4/5. Its function is as follows. Catalyzes the NAD(P)-dependent oxidation of 4-(phosphooxy)-L-threonine (HTP) into 2-amino-3-oxo-4-(phosphooxy)butyric acid which spontaneously decarboxylates to form 3-amino-2-oxopropyl phosphate (AHAP). This chain is 4-hydroxythreonine-4-phosphate dehydrogenase, found in Helicobacter pylori (strain P12).